The chain runs to 339 residues: MSDALKPLIGAAADRPLTRAEAEQAFTILFDGEATPSQIGGLLMALRTRGETVDEYAAAAAVMRAKCNAVRAPEGAMDIVGTGGDGKNTLNISTATAFVVAGAGVVVAKHGNRNLSSKSGTADLQGQMGINVMVGPQVVEKALNEAGIGFMMAPMHHPATAHVMPTRAELGTRTIFNILGPLTNPAGVKRQLTGAFTRALIRPMAETLGLLGSERAWLVHGSDGTDELTITGVSWVAALEDGTVKEVELHPEDAGLPVHPFEAIIGGTPEENATAFRALLDGAPSAYRDAVLLNAAAALVVADRAADLREGVALAAQSIDSGQARAKVEALSRITQDAR.

5-phospho-alpha-D-ribose 1-diphosphate is bound by residues glycine 81, 84–85 (GD), threonine 89, 91–94 (NIST), 109–117 (KHGNRNLSS), and threonine 121. Glycine 81 serves as a coordination point for anthranilate. Residue serine 93 coordinates Mg(2+). An anthranilate-binding site is contributed by asparagine 112. Residue arginine 167 participates in anthranilate binding. Positions 226 and 227 each coordinate Mg(2+).

The protein belongs to the anthranilate phosphoribosyltransferase family. In terms of assembly, homodimer. The cofactor is Mg(2+).

The enzyme catalyses N-(5-phospho-beta-D-ribosyl)anthranilate + diphosphate = 5-phospho-alpha-D-ribose 1-diphosphate + anthranilate. It participates in amino-acid biosynthesis; L-tryptophan biosynthesis; L-tryptophan from chorismate: step 2/5. In terms of biological role, catalyzes the transfer of the phosphoribosyl group of 5-phosphorylribose-1-pyrophosphate (PRPP) to anthranilate to yield N-(5'-phosphoribosyl)-anthranilate (PRA). The sequence is that of Anthranilate phosphoribosyltransferase from Ruegeria pomeroyi (strain ATCC 700808 / DSM 15171 / DSS-3) (Silicibacter pomeroyi).